The following is a 288-amino-acid chain: MAGAKEIRNKIGSVKSTQKITKAMEMVAASKMRRSQESMEASRPYADTMRKVIGHLALGNLEYRHPYLEEREAKRVGYIVISSDRGLCGGLNINLFKKVMTEMKTWSEDGVEIDLAVIGSKATAFFNSYGGNVVAQNSGLGDHPSLEELIGTVGVMLKKYDEGQLDRLYVVNNKFINTMVQEPAIEQLLPLPKSEDEAMQRTHAWDYIYEPEPKPLLDALLVRYVESQVYQGVVENLACEHVARMIAMKAATDNAGDIIDELQLVYNKARQAAITQELSEIVSGASAV.

Belongs to the ATPase gamma chain family. F-type ATPases have 2 components, CF(1) - the catalytic core - and CF(0) - the membrane proton channel. CF(1) has five subunits: alpha(3), beta(3), gamma(1), delta(1), epsilon(1). CF(0) has three main subunits: a, b and c.

The protein localises to the cell inner membrane. Functionally, produces ATP from ADP in the presence of a proton gradient across the membrane. The gamma chain is believed to be important in regulating ATPase activity and the flow of protons through the CF(0) complex. In Aliivibrio fischeri (strain ATCC 700601 / ES114) (Vibrio fischeri), this protein is ATP synthase gamma chain.